A 98-amino-acid polypeptide reads, in one-letter code: Plastocyanin (98 aa).

The Plastocyanin-like domain occupies A1–Q98. H38, C83, H86, and M91 together coordinate Cu(2+).

Belongs to the plastocyanin family. The cofactor is Cu(2+).

The protein localises to the plastid. It localises to the chloroplast thylakoid membrane. Participates in electron transfer between P700 and the cytochrome b6-f complex in photosystem I. Has antiviral activity against Potato virus Y (strain N). The polypeptide is Plastocyanin (PETE) (Ulva pertusa (Sea lettuce)).